Reading from the N-terminus, the 490-residue chain is Bifunctional dihydrocamalexate synthase/camalexin synthase (490 aa).

A helical membrane pass occupies residues 1 to 21 (MSVFLCFLVLLPLILIFLNVL).

Belongs to the cytochrome P450 family.

Its subcellular location is the membrane. The catalysed reaction is 2-(L-cystein-S-yl)-2-(1H-indol-3-yl)-acetonitrile + 2 reduced [NADPH--hemoprotein reductase] + 2 O2 = camalexin + hydrogen cyanide + 2 oxidized [NADPH--hemoprotein reductase] + CO2 + 4 H2O + 2 H(+). It carries out the reaction 2-(L-cystein-S-yl)-2-(1H-indol-3-yl)-acetonitrile + reduced [NADPH--hemoprotein reductase] + O2 = (R)-dihydrocamalexate + hydrogen cyanide + oxidized [NADPH--hemoprotein reductase] + 2 H2O + 2 H(+). The enzyme catalyses (R)-dihydrocamalexate + reduced [NADPH--hemoprotein reductase] + O2 = camalexin + oxidized [NADPH--hemoprotein reductase] + CO2 + 2 H2O. Multifunctional enzyme involved in the biosynthesis of the indole-derived phytoalexin camalexin. Catalyzes two reactions, the formation of dihydrocamalexate from indole-3-acetonitrile-cysteine conjugate and the oxidative decarboxylation of dihydrocamalexate which is the final step in camalexin biosynthesis. Required for the resistance to the fungal pathogens A.brassicicola, B.cinerea, B.elliptica, B.tulipae, L.maculans and Colletotrichum higginsianum. Seems not to be required for resistance to P.syringae, P.porri, and not involved in age-related resistance. This chain is Bifunctional dihydrocamalexate synthase/camalexin synthase (CYP71B15), found in Arabidopsis thaliana (Mouse-ear cress).